The chain runs to 308 residues: Ornithine carbamoyltransferase (308 aa).

Residues 51–54, Gln-78, Arg-102, and 129–132 each bind carbamoyl phosphate; these read STRT and HPTQ. L-ornithine-binding positions include Asn-160, Asp-224, and 228–229; that span reads SM. Residues 264-265 and Arg-292 each bind carbamoyl phosphate; that span reads CL.

This sequence belongs to the aspartate/ornithine carbamoyltransferase superfamily. OTCase family.

The protein resides in the cytoplasm. It carries out the reaction carbamoyl phosphate + L-ornithine = L-citrulline + phosphate + H(+). It participates in amino-acid biosynthesis; L-arginine biosynthesis; L-arginine from L-ornithine and carbamoyl phosphate: step 1/3. Its function is as follows. Reversibly catalyzes the transfer of the carbamoyl group from carbamoyl phosphate (CP) to the N(epsilon) atom of ornithine (ORN) to produce L-citrulline. This is Ornithine carbamoyltransferase from Caldicellulosiruptor saccharolyticus (strain ATCC 43494 / DSM 8903 / Tp8T 6331).